A 340-amino-acid polypeptide reads, in one-letter code: UDP-glucose 4-epimerase (340 aa).

Residues 16–17 (YI), 37–42 (IDNNKN), 60–61 (DL), 82–86 (FAAKT), S127, Y154, K158, and F182 contribute to the NAD(+) site. Residues S127 and Y154 each contribute to the substrate site. The Proton acceptor role is filled by Y154. Substrate is bound by residues N183, 199-200 (TL), 216-218 (FLY), R231, and 295-298 (RSWD).

The protein belongs to the NAD(P)-dependent epimerase/dehydratase family. Homodimer. The cofactor is NAD(+).

It catalyses the reaction UDP-alpha-D-glucose = UDP-alpha-D-galactose. The protein operates within carbohydrate metabolism; galactose metabolism. Involved in the metabolism of galactose. Catalyzes the conversion of UDP-galactose (UDP-Gal) to UDP-glucose (UDP-Glc) through a mechanism involving the transient reduction of NAD. In Mycoplasma genitalium (strain ATCC 33530 / DSM 19775 / NCTC 10195 / G37) (Mycoplasmoides genitalium), this protein is UDP-glucose 4-epimerase (galE).